A 97-amino-acid polypeptide reads, in one-letter code: Protein RnfH (97 aa).

The protein belongs to the UPF0125 (RnfH) family.

In Paramagnetospirillum magneticum (strain ATCC 700264 / AMB-1) (Magnetospirillum magneticum), this protein is Protein RnfH.